Consider the following 578-residue polypeptide: PX domain-containing protein kinase-like protein (578 aa).

A PX domain is found at L14–A126. Residues F88–K481 enclose the Protein kinase domain. Basic residues-rich tracts occupy residues I437 to S448 and K457 to R469. 2 disordered regions span residues I437–S548 and F559–G578. Low complexity predominate over residues S483–A513. Pro residues predominate over residues L514 to P530. The WH2 domain occupies S548–A567. Basic and acidic residues predominate over residues K568–G578.

Belongs to the protein kinase superfamily. As to expression, widely expressed in all tissues examined except in heart. Isoform 1 is expressed in high levels in the brain, skeletal muscle, spleen and testis. Isoform 7 expression has yet to be demonstrated.

It is found in the cytoplasm. The protein localises to the cell membrane. Binds to and modulates brain Na,K-ATPase subunits ATP1B1 and ATP1B3 and may thereby participate in the regulation of electrical excitability and synaptic transmission. May not display kinase activity. This is PX domain-containing protein kinase-like protein from Homo sapiens (Human).